We begin with the raw amino-acid sequence, 130 residues long: Small ribosomal subunit protein uS9 (130 aa).

Belongs to the universal ribosomal protein uS9 family.

This is Small ribosomal subunit protein uS9 from Ralstonia nicotianae (strain ATCC BAA-1114 / GMI1000) (Ralstonia solanacearum).